Here is a 116-residue protein sequence, read N- to C-terminus: Promotilin (116 aa).

Residues 1-25 form the signal peptide; that stretch reads MVSRKAVAVLLMVHVAVMLASQTEA. The tract at residues 39 to 74 is disordered; that stretch reads REKERNKGQKKSLIVQQRSEEVGPLDPVEPPEEEEN.

It belongs to the motilin family.

Its subcellular location is the secreted. Plays an important role in the regulation of interdigestive gastrointestinal motility and indirectly causes rhythmic contraction of duodenal and colonic smooth muscle. This Felis catus (Cat) protein is Promotilin (MLN).